Reading from the N-terminus, the 160-residue chain is Phosphopantetheine adenylyltransferase (160 aa).

Thr-11 lines the substrate pocket. Residues 11–12 (TF) and His-19 contribute to the ATP site. Substrate is bound by residues Lys-43, Leu-75, and Arg-89. Residues 90-92 (GLR), Glu-100, and 125-131 (HMFVSAS) contribute to the ATP site.

It belongs to the bacterial CoaD family. As to quaternary structure, homohexamer. Requires Mg(2+) as cofactor.

It localises to the cytoplasm. The enzyme catalyses (R)-4'-phosphopantetheine + ATP + H(+) = 3'-dephospho-CoA + diphosphate. It participates in cofactor biosynthesis; coenzyme A biosynthesis; CoA from (R)-pantothenate: step 4/5. Functionally, reversibly transfers an adenylyl group from ATP to 4'-phosphopantetheine, yielding dephospho-CoA (dPCoA) and pyrophosphate. This Methylobacillus flagellatus (strain ATCC 51484 / DSM 6875 / VKM B-1610 / KT) protein is Phosphopantetheine adenylyltransferase.